Reading from the N-terminus, the 532-residue chain is 2,3-bisphosphoglycerate-independent phosphoglycerate mutase (532 aa).

Positions 15 and 65 each coordinate Mn(2+). The active-site Phosphoserine intermediate is serine 65. Residues histidine 126, 156–157 (RD), arginine 188, arginine 194, 258–261 (RPDR), and lysine 331 each bind substrate. Mn(2+)-binding residues include aspartate 398, histidine 402, aspartate 439, histidine 440, and histidine 457.

This sequence belongs to the BPG-independent phosphoglycerate mutase family. As to quaternary structure, monomer. Requires Mn(2+) as cofactor.

The enzyme catalyses (2R)-2-phosphoglycerate = (2R)-3-phosphoglycerate. The protein operates within carbohydrate degradation; glycolysis; pyruvate from D-glyceraldehyde 3-phosphate: step 3/5. Catalyzes the interconversion of 2-phosphoglycerate and 3-phosphoglycerate. This chain is 2,3-bisphosphoglycerate-independent phosphoglycerate mutase, found in Gloeothece citriformis (strain PCC 7424) (Cyanothece sp. (strain PCC 7424)).